Reading from the N-terminus, the 183-residue chain is Neuroblastoma suppressor of tumorigenicity 1 (183 aa).

The first 19 residues, 1–19 (MVMCVRAVLVCVLLELSRA), serve as a signal peptide directing secretion. Disulfide bonds link C38–C88, C52–C102, C62–C121, C66–C123, and C85–C126. In terms of domain architecture, CTCK spans 38 to 127 (CEAKNITQIV…ILHCSCQSCS (90 aa)). The interval 145 to 170 (AQDLPSLPDATHTHPQHAHMQADQRD) is disordered.

It belongs to the DAN family.

The protein resides in the secreted. Its function is as follows. May act as a tumor suppressor. The sequence is that of Neuroblastoma suppressor of tumorigenicity 1 (nbl1) from Danio rerio (Zebrafish).